We begin with the raw amino-acid sequence, 635 residues long: Probable extracellular metalloproteinase 1 (635 aa).

The signal sequence occupies residues 1-19; the sequence is MHGLLLAAGLLSLPLHVLA. A propeptide spanning residues 20-246 is cleaved from the precursor; it reads HPQPSTSTSL…VHNVVDYVAH (227 aa). N-linked (GlcNAc...) asparagine glycosylation is present at asparagine 287. Histidine 430 provides a ligand contact to Zn(2+). Residue glutamate 431 is part of the active site. Histidine 434 is a Zn(2+) binding site. 3 N-linked (GlcNAc...) asparagine glycosylation sites follow: asparagine 475, asparagine 594, and asparagine 623.

This sequence belongs to the peptidase M36 family. Zn(2+) is required as a cofactor.

Its subcellular location is the secreted. Secreted metalloproteinase probably acting as a virulence factor. This chain is Probable extracellular metalloproteinase 1 (MEP1), found in Arthroderma benhamiae (strain ATCC MYA-4681 / CBS 112371) (Trichophyton mentagrophytes).